A 150-amino-acid chain; its full sequence is Large ribosomal subunit protein bL9 (150 aa).

The protein belongs to the bacterial ribosomal protein bL9 family.

Its function is as follows. Binds to the 23S rRNA. This chain is Large ribosomal subunit protein bL9, found in Polynucleobacter necessarius subsp. necessarius (strain STIR1).